The primary structure comprises 223 residues: Probable glutathione S-transferase (223 aa).

In terms of domain architecture, GST N-terminal spans 2–81; the sequence is AEVKLLGFWY…YIDETFEGPS (80 aa). Glutathione is bound by residues serine 12, lysine 39, valine 53, and 65–66; that span reads ES. In terms of domain architecture, GST C-terminal spans 86–212; that stretch reads DPYDRALARF…ELLAFFRARF (127 aa).

This sequence belongs to the GST superfamily. HSP26 family. In terms of tissue distribution, root tip-specific expression.

It carries out the reaction RX + glutathione = an S-substituted glutathione + a halide anion + H(+). This is Probable glutathione S-transferase from Nicotiana tabacum (Common tobacco).